Consider the following 129-residue polypeptide: Flagellar assembly factor FliW 2 (129 aa).

Belongs to the FliW family. Interacts with translational regulator CsrA and flagellin(s).

Its subcellular location is the cytoplasm. In terms of biological role, acts as an anti-CsrA protein, binds CsrA and prevents it from repressing translation of its target genes, one of which is flagellin. Binds to flagellin and participates in the assembly of the flagellum. The protein is Flagellar assembly factor FliW 2 of Helicobacter pylori (strain J99 / ATCC 700824) (Campylobacter pylori J99).